Here is a 120-residue protein sequence, read N- to C-terminus: Ribosome-binding factor A (120 aa).

The protein belongs to the RbfA family. Monomer. Binds 30S ribosomal subunits, but not 50S ribosomal subunits or 70S ribosomes.

It is found in the cytoplasm. One of several proteins that assist in the late maturation steps of the functional core of the 30S ribosomal subunit. Associates with free 30S ribosomal subunits (but not with 30S subunits that are part of 70S ribosomes or polysomes). Required for efficient processing of 16S rRNA. May interact with the 5'-terminal helix region of 16S rRNA. The protein is Ribosome-binding factor A of Verminephrobacter eiseniae (strain EF01-2).